The primary structure comprises 211 residues: BAG family molecular chaperone regulator 2 (211 aa).

The residue at position 2 (A2) is an N-acetylalanine. S20, S31, and S73 each carry phosphoserine. The stretch at 20-61 forms a coiled coil; sequence SMADRSSRLLESLDQLELRVEALREAATAVEQEKEVLLEMIH. One can recognise a BAG domain in the interval 109-189; the sequence is SLKHATRIID…NIENADKAIK (81 aa).

In terms of assembly, binds to the ATPase domain of HSP/HSC70 chaperones. May interact with NWD1. Interacts with HSPA1A (via NBD), HSPA1B (via NBD) and HSPA8. May interact with DNJC9; the interaction seems to be histone-dependent.

Its function is as follows. Co-chaperone for HSP70 and HSC70 chaperone proteins. Acts as a nucleotide-exchange factor (NEF) promoting the release of ADP from the HSP70 and HSC70 proteins thereby triggering client/substrate protein release. The polypeptide is BAG family molecular chaperone regulator 2 (Bos taurus (Bovine)).